The following is a 189-amino-acid chain: dCTP deaminase, dUMP-forming (189 aa).

DCTP is bound by residues 101 to 106 (KSSLGR), Asp119, 127 to 129 (TLE), Gln148, Tyr162, and Gln174. Glu129 serves as the catalytic Proton donor/acceptor. Positions 163–189 (GSSEAGSKYQGQRGPTPSKAYLNFNRS) are disordered.

This sequence belongs to the dCTP deaminase family. As to quaternary structure, homotrimer.

The enzyme catalyses dCTP + 2 H2O = dUMP + NH4(+) + diphosphate. It participates in pyrimidine metabolism; dUMP biosynthesis; dUMP from dCTP: step 1/1. In terms of biological role, bifunctional enzyme that catalyzes both the deamination of dCTP to dUTP and the hydrolysis of dUTP to dUMP without releasing the toxic dUTP intermediate. This Rhodococcus erythropolis (strain PR4 / NBRC 100887) protein is dCTP deaminase, dUMP-forming.